Reading from the N-terminus, the 74-residue chain is Ubiquitin-like protein FUBI (74 aa).

Belongs to the ubiquitin family.

The polypeptide is Ubiquitin-like protein FUBI (FAU) (Bos taurus (Bovine)).